A 289-amino-acid chain; its full sequence is Bidirectional sugar transporter SWEET11 (289 aa).

The Extracellular segment spans residues 1 to 9; sequence MSLFNTENT. The chain crosses the membrane as a helical span at residues 10–30; it reads WAFVFGLLGNLISFAVFLSPV. The MtN3/slv 1 domain maps to 12 to 98; sequence FVFGLLGNLI…SMFLAYAPKP (87 aa). Residues 31–43 are Cytoplasmic-facing; the sequence is PTFYRIWKKKTTE. Residues 44–64 traverse the membrane as a helical segment; it reads GFQSIPYVVALFSATLWLYYA. Residues 65-70 are Extracellular-facing; that stretch reads TQKKDV. The chain crosses the membrane as a helical span at residues 71-91; sequence FLLVTINAFGCFIETIYISMF. Residues 92 to 105 are Cytoplasmic-facing; that stretch reads LAYAPKPARMLTVK. The chain crosses the membrane as a helical span at residues 106 to 126; sequence MLLLMNFGGFCAILLLCQFLV. The Extracellular portion of the chain corresponds to 127–133; it reads KGATRAK. The chain crosses the membrane as a helical span at residues 134-154; sequence IIGGICVGFSVCVFAAPLSII. In terms of domain architecture, MtN3/slv 2 spans 134–218; that stretch reads IIGGICVGFS…ILYVVYKYCK (85 aa). Residues 155-167 lie on the Cytoplasmic side of the membrane; sequence RTVIKTRSVEYMP. The chain crosses the membrane as a helical span at residues 168 to 188; sequence FSLSLTLTISAVIWLLYGLAL. Topologically, residues 189-192 are extracellular; that stretch reads KDIY. A helical transmembrane segment spans residues 193–213; that stretch reads VAFPNVLGFALGALQMILYVV. Residues 214-289 lie on the Cytoplasmic side of the membrane; sequence YKYCKTSPHL…GKQSSSAAAT (76 aa). Residues 266–289 are disordered; that stretch reads DRRAEIEDGQTPKHGKQSSSAAAT. A Phosphothreonine modification is found at threonine 276.

The protein belongs to the SWEET sugar transporter family. In terms of assembly, forms homooligomers and heterooligomers with SWEET1, SWEET3, SWEET5, SWEET6, SWEET7, SWEET8, SWEET9, SWEET12, SWEET13, SWEET15 and SWEET17. As to expression, expressed in leaves, especially in phloem. Expressed in developing seeds.

It is found in the cell membrane. Mediates both low-affinity uptake and efflux of sugar across the plasma membrane. Involved in phloem loading by mediating export from parenchyma cells feeding H(+)-coupled import into the sieve element/companion cell complex, thus contributing to the sucrose migration from sites of synthesis in the mesophyll to the phloem. Contributes to seed filling by triggering sucrose efflux involved in the transfer of sugars from seed coat to embryos. The chain is Bidirectional sugar transporter SWEET11 from Arabidopsis thaliana (Mouse-ear cress).